The following is a 429-amino-acid chain: Threonine synthase (429 aa).

Lys108 is modified (N6-(pyridoxal phosphate)lysine).

This sequence belongs to the threonine synthase family. Requires pyridoxal 5'-phosphate as cofactor.

It catalyses the reaction O-phospho-L-homoserine + H2O = L-threonine + phosphate. The protein operates within amino-acid biosynthesis; L-threonine biosynthesis; L-threonine from L-aspartate: step 5/5. In terms of biological role, catalyzes the gamma-elimination of phosphate from L-phosphohomoserine and the beta-addition of water to produce L-threonine. This Buchnera aphidicola subsp. Acyrthosiphon pisum (strain APS) (Acyrthosiphon pisum symbiotic bacterium) protein is Threonine synthase (thrC).